A 384-amino-acid chain; its full sequence is tRNA-specific 2-thiouridylase MnmA (384 aa).

Residues 18–25 (AMSGGVDS) and Leu44 contribute to the ATP site. Cys112 serves as the catalytic Nucleophile. A disulfide bond links Cys112 and Cys209. Gly136 provides a ligand contact to ATP. The tract at residues 159–161 (RDQ) is interaction with tRNA. The active-site Cysteine persulfide intermediate is Cys209.

The protein belongs to the MnmA/TRMU family.

It localises to the cytoplasm. It catalyses the reaction S-sulfanyl-L-cysteinyl-[protein] + uridine(34) in tRNA + AH2 + ATP = 2-thiouridine(34) in tRNA + L-cysteinyl-[protein] + A + AMP + diphosphate + H(+). Functionally, catalyzes the 2-thiolation of uridine at the wobble position (U34) of tRNA, leading to the formation of s(2)U34. The sequence is that of tRNA-specific 2-thiouridylase MnmA from Methylobacterium radiotolerans (strain ATCC 27329 / DSM 1819 / JCM 2831 / NBRC 15690 / NCIMB 10815 / 0-1).